A 198-amino-acid chain; its full sequence is Large ribosomal subunit protein uL13 (198 aa).

It belongs to the universal ribosomal protein uL13 family.

The protein is Large ribosomal subunit protein uL13 (RPL13A) of Tetrahymena thermophila (strain SB210).